The primary structure comprises 497 residues: Glycerol kinase (497 aa).

Thr12 lines the ADP pocket. Positions 12, 13, and 14 each coordinate ATP. Thr12 is a binding site for sn-glycerol 3-phosphate. Position 16 (Arg16) interacts with ADP. Arg82, Glu83, Tyr134, and Asp243 together coordinate sn-glycerol 3-phosphate. Glycerol contacts are provided by Arg82, Glu83, Tyr134, Asp243, and Gln244. Positions 265 and 308 each coordinate ADP. ATP contacts are provided by Thr265, Gly308, Gln312, and Gly411. Gly411 is an ADP binding site.

This sequence belongs to the FGGY kinase family.

The catalysed reaction is glycerol + ATP = sn-glycerol 3-phosphate + ADP + H(+). It participates in polyol metabolism; glycerol degradation via glycerol kinase pathway; sn-glycerol 3-phosphate from glycerol: step 1/1. Inhibited by fructose 1,6-bisphosphate (FBP). Key enzyme in the regulation of glycerol uptake and metabolism. Catalyzes the phosphorylation of glycerol to yield sn-glycerol 3-phosphate. This chain is Glycerol kinase, found in Sinorhizobium fredii (strain NBRC 101917 / NGR234).